A 1126-amino-acid chain; its full sequence is NUT family member 1 (1126 aa).

Disordered stretches follow at residues 1–56 (MASD…PVFS), 334–367 (IPKKAASKTRAPRRRQRKPQRPPVPEAPKEIPPE), 475–515 (EDAQ…QGAA), 537–559 (QEQTLGGPAGIHKDGNNLPSPSS), 664–692 (AGMLTRGREPPSVVSQKGSSRAVRGDDRG), 755–810 (ALNS…GPGL), and 932–1014 (GEGR…EELS). Residues 30 to 55 (FAPPPPVPPDQPLWEPSPQPPIPPVF) are compositionally biased toward pro residues. The segment covering 338-353 (AASKTRAPRRRQRKPQ) has biased composition (basic residues). Over residues 962-975 (KLTNGQGQGSTSPR) the composition is skewed to polar residues. S973 carries the phosphoserine modification. The span at 987 to 1005 (TPIKEKCTSADRAKRRETE) shows a compositional bias: basic and acidic residues. S1022, S1025, and S1027 each carry phosphoserine. The tract at residues 1032–1126 (PLSTRQASGG…SKRKKRRRSQ (95 aa)) is disordered. Q1042 bears the N5-methylglutamine mark. Residues 1106–1126 (PRKRRRDGFVTSKRKKRRRSQ) are compositionally biased toward basic residues.

It belongs to the NUT family. Post-translationally, methylated at Gln-1042 by N6AMT1. In terms of processing, phosphorylation on Ser-1022, Ser-1025 or Ser-1027 is important for cytoplasmic export.

The protein resides in the cytoplasm. The protein localises to the nucleus. Its function is as follows. Plays a role in the regulation of proliferation. Regulates TERT expression by modulating SP1 binding to TERT promoter binding sites. The protein is NUT family member 1 of Mus musculus (Mouse).